A 456-amino-acid chain; its full sequence is Bifunctional protein GlmU (456 aa).

Positions 1-229 (MSNSSMSVVI…LSEVEGVNNR (229 aa)) are pyrophosphorylase. Residues 11–14 (LAAG), Lys-25, Gln-76, 81–82 (GT), 103–105 (YGD), Gly-140, Glu-154, Asn-169, and Asn-227 each bind UDP-N-acetyl-alpha-D-glucosamine. Asp-105 contacts Mg(2+). Asn-227 lines the Mg(2+) pocket. The interval 230 to 250 (LQLSALERVFQTEQAEKLLLA) is linker. Residues 251–456 (GVMLLDPSRF…QGWKRPVKKK (206 aa)) form an N-acetyltransferase region. Residues Arg-333 and Lys-351 each coordinate UDP-N-acetyl-alpha-D-glucosamine. His-363 functions as the Proton acceptor in the catalytic mechanism. Residues Tyr-366 and Asn-377 each contribute to the UDP-N-acetyl-alpha-D-glucosamine site. Acetyl-CoA-binding positions include Ala-380, 386–387 (NY), Ser-405, Ala-423, and Arg-440.

The protein in the N-terminal section; belongs to the N-acetylglucosamine-1-phosphate uridyltransferase family. In the C-terminal section; belongs to the transferase hexapeptide repeat family. As to quaternary structure, homotrimer. It depends on Mg(2+) as a cofactor.

The protein localises to the cytoplasm. The catalysed reaction is alpha-D-glucosamine 1-phosphate + acetyl-CoA = N-acetyl-alpha-D-glucosamine 1-phosphate + CoA + H(+). It catalyses the reaction N-acetyl-alpha-D-glucosamine 1-phosphate + UTP + H(+) = UDP-N-acetyl-alpha-D-glucosamine + diphosphate. It functions in the pathway nucleotide-sugar biosynthesis; UDP-N-acetyl-alpha-D-glucosamine biosynthesis; N-acetyl-alpha-D-glucosamine 1-phosphate from alpha-D-glucosamine 6-phosphate (route II): step 2/2. Its pathway is nucleotide-sugar biosynthesis; UDP-N-acetyl-alpha-D-glucosamine biosynthesis; UDP-N-acetyl-alpha-D-glucosamine from N-acetyl-alpha-D-glucosamine 1-phosphate: step 1/1. The protein operates within bacterial outer membrane biogenesis; LPS lipid A biosynthesis. Functionally, catalyzes the last two sequential reactions in the de novo biosynthetic pathway for UDP-N-acetylglucosamine (UDP-GlcNAc). The C-terminal domain catalyzes the transfer of acetyl group from acetyl coenzyme A to glucosamine-1-phosphate (GlcN-1-P) to produce N-acetylglucosamine-1-phosphate (GlcNAc-1-P), which is converted into UDP-GlcNAc by the transfer of uridine 5-monophosphate (from uridine 5-triphosphate), a reaction catalyzed by the N-terminal domain. The protein is Bifunctional protein GlmU of Yersinia pseudotuberculosis serotype O:1b (strain IP 31758).